The following is a 299-amino-acid chain: Probable lipid kinase YegS (299 aa).

Positions 2–133 constitute a DAGKc domain; that stretch reads ANFPASLLIL…IDMARVNDKT (132 aa). ATP-binding positions include T40, 66 to 72, and T95; that span reads GDGTINE. Mg(2+) is bound by residues L215, D218, and L220. Catalysis depends on E271, which acts as the Proton acceptor.

The protein belongs to the diacylglycerol/lipid kinase family. YegS lipid kinase subfamily. Mg(2+) serves as cofactor. Ca(2+) is required as a cofactor.

It localises to the cytoplasm. Its function is as follows. Probably phosphorylates lipids; the in vivo substrate is unknown. This Salmonella agona (strain SL483) protein is Probable lipid kinase YegS.